Reading from the N-terminus, the 110-residue chain is Thioredoxin Asp f 29 (110 aa).

The region spanning 1-110 (MSHNVEKITD…LEAAIKAHVA (110 aa)) is the Thioredoxin domain. Active-site nucleophile residues include Cys34 and Cys37. Cys34 and Cys37 are disulfide-bonded.

Belongs to the thioredoxin family.

Its function is as follows. Participates in various redox reactions through the reversible oxidation of its active center dithiol to a disulfide and catalyzes dithiol-disulfide exchange reactions. The polypeptide is Thioredoxin Asp f 29 (Aspergillus fumigatus (Neosartorya fumigata)).